Reading from the N-terminus, the 410-residue chain is Arginine biosynthesis bifunctional protein ArgJ (410 aa).

Substrate contacts are provided by threonine 160, lysine 186, threonine 197, glutamate 283, asparagine 405, and threonine 410. Threonine 197 serves as the catalytic Nucleophile.

Belongs to the ArgJ family. Heterotetramer of two alpha and two beta chains.

The protein localises to the cytoplasm. It carries out the reaction N(2)-acetyl-L-ornithine + L-glutamate = N-acetyl-L-glutamate + L-ornithine. The catalysed reaction is L-glutamate + acetyl-CoA = N-acetyl-L-glutamate + CoA + H(+). The protein operates within amino-acid biosynthesis; L-arginine biosynthesis; L-ornithine and N-acetyl-L-glutamate from L-glutamate and N(2)-acetyl-L-ornithine (cyclic): step 1/1. It participates in amino-acid biosynthesis; L-arginine biosynthesis; N(2)-acetyl-L-ornithine from L-glutamate: step 1/4. Functionally, catalyzes two activities which are involved in the cyclic version of arginine biosynthesis: the synthesis of N-acetylglutamate from glutamate and acetyl-CoA as the acetyl donor, and of ornithine by transacetylation between N(2)-acetylornithine and glutamate. The sequence is that of Arginine biosynthesis bifunctional protein ArgJ from Geobacillus kaustophilus (strain HTA426).